Reading from the N-terminus, the 532-residue chain is Glucose-6-phosphate isomerase (532 aa).

Glutamate 330 serves as the catalytic Proton donor. Residues histidine 359 and lysine 461 contribute to the active site.

Belongs to the GPI family.

It is found in the cytoplasm. The catalysed reaction is alpha-D-glucose 6-phosphate = beta-D-fructose 6-phosphate. Its pathway is carbohydrate biosynthesis; gluconeogenesis. It functions in the pathway carbohydrate degradation; glycolysis; D-glyceraldehyde 3-phosphate and glycerone phosphate from D-glucose: step 2/4. Its function is as follows. Catalyzes the reversible isomerization of glucose-6-phosphate to fructose-6-phosphate. This chain is Glucose-6-phosphate isomerase, found in Synechococcus sp. (strain CC9902).